The sequence spans 226 residues: UPF0758 protein SPD_0975 (226 aa).

An MPN domain is found at 103–225 (SILSSQKLAK…YFSYREKTDL (123 aa)). Residues H174, H176, and D187 each coordinate Zn(2+). The JAMM motif signature appears at 174-187 (HNHPSGAVAPSQND).

It belongs to the UPF0758 family.

This is UPF0758 protein SPD_0975 from Streptococcus pneumoniae serotype 2 (strain D39 / NCTC 7466).